The sequence spans 293 residues: Protein nud-2 (293 aa).

Residues 36-147 (EIEKMMDSEL…EKIAMLESEL (112 aa)) are a coiled coil. Residues 239–293 (KSQRVSTGTGAGACINRIVKDLMTKVERLDSILSTIRVSNNSSNNNSSHLTTTRA) are required for interaction with unc-83 isoform c.

Belongs to the nudE family. Component of a dynein-regulating complex composed of at least lis-1 and nud-2. Interacts with lis-1; the interaction is direct. Interacts (via C-terminus) with unc-83; the interaction is direct, and is required for recruitment of nud-2 to the nuclear envelope. Expressed in ventral cord neurons, the pharynx, seam cells of the hypodermis and in vulval muscle cells.

The protein resides in the nucleus envelope. Part of a complex with lis-1, which is recruited to the nuclear envelope by unc-83, where, in turn, it recruits dynein to the nuclear surface and regulates nuclear migration in hypodermal precursor cells. Plays a role in GABAergic synaptic vesicle localization in the ventral nerve cord. This chain is Protein nud-2, found in Caenorhabditis elegans.